Reading from the N-terminus, the 490-residue chain is ABC transporter ATP-binding protein ModF (490 aa).

ABC transporter domains follow at residues 4 to 235 and 261 to 489; these read LQIL…AHSE and IVLN…LTKI. ATP-binding positions include 36-43 and 293-300; these read GSNGSGKS and GPNGAGKS.

This sequence belongs to the ABC transporter superfamily.

It is found in the cell inner membrane. Functionally, probably not involved in the transport of molybdenum into the cell. The chain is ABC transporter ATP-binding protein ModF (modF) from Escherichia coli (strain K12).